The sequence spans 800 residues: Phenylalanine--tRNA ligase beta subunit (800 aa).

The 110-residue stretch at 39-148 (TAALAPFVVG…ADTPVGVPLV (110 aa)) folds into the tRNA-binding domain. The region spanning 402–478 (VWRRTIALRP…RLHGFDLVPA (77 aa)) is the B5 domain. Positions 456, 462, 465, and 466 each coordinate Mg(2+). The FDX-ACB domain maps to 706-799 (SPFQPVARDF…VTKLTGGSLR (94 aa)).

It belongs to the phenylalanyl-tRNA synthetase beta subunit family. Type 1 subfamily. In terms of assembly, tetramer of two alpha and two beta subunits. Mg(2+) serves as cofactor.

It is found in the cytoplasm. It carries out the reaction tRNA(Phe) + L-phenylalanine + ATP = L-phenylalanyl-tRNA(Phe) + AMP + diphosphate + H(+). This Rhodospirillum rubrum (strain ATCC 11170 / ATH 1.1.1 / DSM 467 / LMG 4362 / NCIMB 8255 / S1) protein is Phenylalanine--tRNA ligase beta subunit.